The primary structure comprises 468 residues: MITTRFAPSPTGFLHVGGVRTALFSWLYAKNNNGKFILRIEDTDLERSTQEAVDAILDGMSWLGLKNDGEIYYQTKRFDRYKEVIQELIADGKAYYCSCSKERLEELREYQQANNLKTGYDGKCRDANYIPQQGESYVVRFKNPQDGVVSWDDAVKGRISISNHELDDMIIQRADGSPTYNFCVVVDDIDMAITHIIRGDDHVNNTPKQINIYKALNANVPVFAHVPMILGPDGAKLSKRHGAVNVMQYREDGYLPQAILNYLVRLGWSHGDQEIFSIEEMIKAFNLEHINASPSRFDFEKLKWLNKHYIKESKFDDIQTEVEYHFAKTGLDISNGPDLKELVAVMAEKVDTLVELAEKSSYFYSDDISYDENAVKKHIKASTGEIFVKLLENFEALDAQQWQDPDVLHNIVSTTAEQCQVGMGKVGMPLRVAITGSGQSPDIGITLKLLGKNKVVARLTKALEELCK.

The 'HIGH' region signature appears at 8 to 18 (PSPTGFLHVGG). Positions 97, 99, 124, and 126 each coordinate Zn(2+). The 'KMSKS' region signature appears at 236–240 (KLSKR). Residue Lys239 coordinates ATP.

It belongs to the class-I aminoacyl-tRNA synthetase family. Glutamate--tRNA ligase type 1 subfamily. In terms of assembly, monomer. Zn(2+) is required as a cofactor.

The protein localises to the cytoplasm. The catalysed reaction is tRNA(Glu) + L-glutamate + ATP = L-glutamyl-tRNA(Glu) + AMP + diphosphate. In terms of biological role, catalyzes the attachment of glutamate to tRNA(Glu) in a two-step reaction: glutamate is first activated by ATP to form Glu-AMP and then transferred to the acceptor end of tRNA(Glu). This Francisella tularensis subsp. mediasiatica (strain FSC147) protein is Glutamate--tRNA ligase.